The sequence spans 447 residues: Serine/threonine-protein phosphatase 2A 55 kDa regulatory subunit B gamma isoform (447 aa).

7 WD repeats span residues 22 to 61 (TEAD…KNAP), 87 to 128 (EIEE…KRPE), 171 to 209 (GHTY…RSFN), 220 to 260 (DLTE…LCDK), 279 to 317 (EIIS…RPIE), 334 to 375 (ESDC…DVTL), and 410 to 446 (DFTK…NSDM).

Belongs to the phosphatase 2A regulatory subunit B family. In terms of assembly, PP2A consists of a common heterodimeric core enzyme, composed of a 36 kDa catalytic subunit (subunit C) and a 65 kDa constant regulatory subunit (PR65 or subunit A), that associates with a variety of regulatory subunits. Proteins that associate with the core dimer include three families of regulatory subunits B (the R2/B/PR55/B55, R3/B''/PR72/PR130/PR59 and R5/B'/B56 families), the 48 kDa variable regulatory subunit, viral proteins, and cell signaling molecules. Interacts with IER5.

In terms of biological role, the B regulatory subunit might modulate substrate selectivity and catalytic activity, and might also direct the localization of the catalytic enzyme to a particular subcellular compartment. In Mus musculus (Mouse), this protein is Serine/threonine-protein phosphatase 2A 55 kDa regulatory subunit B gamma isoform (Ppp2r2c).